Here is a 432-residue protein sequence, read N- to C-terminus: Adenylosuccinate synthetase (432 aa).

GTP contacts are provided by residues 12–18 (GDEGKGK) and 40–42 (GHT). Aspartate 13 functions as the Proton acceptor in the catalytic mechanism. Residues aspartate 13 and glycine 40 each coordinate Mg(2+). IMP is bound by residues 13 to 16 (DEGK), 38 to 41 (NAGH), threonine 132, arginine 146, glutamine 226, threonine 241, and arginine 305. Residue histidine 41 is the Proton donor of the active site. Substrate is bound at residue 301 to 307 (VVTGRKR). GTP contacts are provided by residues arginine 307, 333-335 (KLD), and 415-417 (STS).

This sequence belongs to the adenylosuccinate synthetase family. In terms of assembly, homodimer. Requires Mg(2+) as cofactor.

Its subcellular location is the cytoplasm. The catalysed reaction is IMP + L-aspartate + GTP = N(6)-(1,2-dicarboxyethyl)-AMP + GDP + phosphate + 2 H(+). It participates in purine metabolism; AMP biosynthesis via de novo pathway; AMP from IMP: step 1/2. In terms of biological role, plays an important role in the de novo pathway of purine nucleotide biosynthesis. Catalyzes the first committed step in the biosynthesis of AMP from IMP. In Mesorhizobium japonicum (strain LMG 29417 / CECT 9101 / MAFF 303099) (Mesorhizobium loti (strain MAFF 303099)), this protein is Adenylosuccinate synthetase.